We begin with the raw amino-acid sequence, 348 residues long: N-acetyl-gamma-glutamyl-phosphate reductase (348 aa).

Cysteine 151 is an active-site residue.

It belongs to the NAGSA dehydrogenase family. Type 1 subfamily.

Its subcellular location is the cytoplasm. The catalysed reaction is N-acetyl-L-glutamate 5-semialdehyde + phosphate + NADP(+) = N-acetyl-L-glutamyl 5-phosphate + NADPH + H(+). It functions in the pathway amino-acid biosynthesis; L-arginine biosynthesis; N(2)-acetyl-L-ornithine from L-glutamate: step 3/4. Functionally, catalyzes the NADPH-dependent reduction of N-acetyl-5-glutamyl phosphate to yield N-acetyl-L-glutamate 5-semialdehyde. The sequence is that of N-acetyl-gamma-glutamyl-phosphate reductase from Lachnospira eligens (strain ATCC 27750 / DSM 3376 / VPI C15-48 / C15-B4) (Eubacterium eligens).